The following is a 357-amino-acid chain: Cinnamyl alcohol dehydrogenase 1 (357 aa).

Cysteine 47 contributes to the Zn(2+) binding site. Threonine 49 contacts NADP(+). Residues histidine 69, glutamate 70, cysteine 100, cysteine 103, cysteine 106, cysteine 114, and cysteine 163 each coordinate Zn(2+). Residues threonine 167, 188 to 193 (GLGGVG), 211 to 216 (SSSDKK), threonine 251, glycine 275, and 298 to 300 (SFI) contribute to the NADP(+) site.

Belongs to the zinc-containing alcohol dehydrogenase family. In terms of assembly, homodimer. Zn(2+) serves as cofactor. Expressed in leaves, mainly in peltate glands.

It carries out the reaction (E)-cinnamyl alcohol + NADP(+) = (E)-cinnamaldehyde + NADPH + H(+). The enzyme catalyses (E)-coniferol + NADP(+) = (E)-coniferaldehyde + NADPH + H(+). The catalysed reaction is (E)-sinapyl alcohol + NADP(+) = (E)-sinapaldehyde + NADPH + H(+). It catalyses the reaction (E)-4-coumaroyl alcohol + NADP(+) = (E)-4-coumaraldehyde + NADPH + H(+). It carries out the reaction (E)-caffeyl alcohol + NADP(+) = (E)-caffeyl aldehyde + NADPH + H(+). Its pathway is aromatic compound metabolism; phenylpropanoid biosynthesis. With respect to regulation, 60% inhibition by 5 mM Ca(+), Mg(+) or Cu(+). In terms of biological role, involved in the production of citral, a mixture of geranial and neral with a strong lemony scent. Reversibly oxidizes geraniol to produce geranial at half the efficiency compared with its activity with cinnamyl alcohol. Does not use nerol and neral as substrates. The chain is Cinnamyl alcohol dehydrogenase 1 (CAD1) from Ocimum basilicum (Sweet basil).